A 347-amino-acid polypeptide reads, in one-letter code: MKTLTPCAFTLGELAERLKARLVGDSDRRVTGLATLLDAGPNDITFLANKTYLKYLPDTRAAAVLVHPAHGTDAPCARLELENPYLGYAELSRLFDPLAGQAPEGVHPSAVVAESARIGEHVSVGPQCVIEAGAVIGDGCVIGAGSIVGADSEIGADSRLHANVTVYHGVSVGRRAILHSGCVIGADGFGFAHDGQGWHKIAQLGGVIVGDDVEIGSCSSIDRGALGDTVIGNDVKIDSQVQIAHNVQIGDHSALAGCVGIAGSTRVGSHCMLGGGVGLSGHLTLCDGVQVTGMSLVTNSIHEPGVYSSGTGAMPNGLWRKNAVRFKQLDELAKRLSRLERGASDTP.

H245 functions as the Proton acceptor in the catalytic mechanism.

The protein belongs to the transferase hexapeptide repeat family. LpxD subfamily. In terms of assembly, homotrimer.

It catalyses the reaction a UDP-3-O-[(3R)-3-hydroxyacyl]-alpha-D-glucosamine + a (3R)-hydroxyacyl-[ACP] = a UDP-2-N,3-O-bis[(3R)-3-hydroxyacyl]-alpha-D-glucosamine + holo-[ACP] + H(+). Its pathway is bacterial outer membrane biogenesis; LPS lipid A biosynthesis. In terms of biological role, catalyzes the N-acylation of UDP-3-O-acylglucosamine using 3-hydroxyacyl-ACP as the acyl donor. Is involved in the biosynthesis of lipid A, a phosphorylated glycolipid that anchors the lipopolysaccharide to the outer membrane of the cell. The sequence is that of UDP-3-O-acylglucosamine N-acyltransferase from Chromohalobacter salexigens (strain ATCC BAA-138 / DSM 3043 / CIP 106854 / NCIMB 13768 / 1H11).